We begin with the raw amino-acid sequence, 317 residues long: MHNYLDFEKPISDLEGKILELKKLASEDESVNTSDEIARLEGRVRDAMVEIYSKLSPWQKTQVARHPSRPHFLDYASRLFTEFTPLAGDRNFANDDAIQAGLARFRGAPVAVIGQEKGNDTKSRIKHNFGSPRPEGYRKATRIMEMADRFGLPLITLVDTAGAYPGVNAEERGQAEAIARSTEMCLNVKVPIVTVVIGEGGSGGAIAIATGNRVYMLEHAIYSVISPEGAASILWRDSTRAKEAASNMKITAEDLKSLGVIDGIIPEPIGGGHRDPDAVISRTEAVIGDALKELSARSGDELRSDRRQKYLNIGRNL.

A CoA carboxyltransferase C-terminal domain is found at 40–293 (LEGRVRDAMV…EAVIGDALKE (254 aa)).

It belongs to the AccA family. As to quaternary structure, acetyl-CoA carboxylase is a heterohexamer composed of biotin carboxyl carrier protein (AccB), biotin carboxylase (AccC) and two subunits each of ACCase subunit alpha (AccA) and ACCase subunit beta (AccD).

The protein resides in the cytoplasm. The catalysed reaction is N(6)-carboxybiotinyl-L-lysyl-[protein] + acetyl-CoA = N(6)-biotinyl-L-lysyl-[protein] + malonyl-CoA. Its pathway is lipid metabolism; malonyl-CoA biosynthesis; malonyl-CoA from acetyl-CoA: step 1/1. Its function is as follows. Component of the acetyl coenzyme A carboxylase (ACC) complex. First, biotin carboxylase catalyzes the carboxylation of biotin on its carrier protein (BCCP) and then the CO(2) group is transferred by the carboxyltransferase to acetyl-CoA to form malonyl-CoA. The protein is Acetyl-coenzyme A carboxylase carboxyl transferase subunit alpha of Sinorhizobium medicae (strain WSM419) (Ensifer medicae).